A 370-amino-acid polypeptide reads, in one-letter code: MAESNKEAIDSARSNVFKESESLEGTCAKIGGYDFNNGIDHSKLLKSMVSTGFQASNLGDAMIITNQMLDWRLSHDEVPENCSEEEKKNRESVKCKIFLGFTSNLISSGVRETICYLTQHRMVDVLVTTTGGIEEDFIKCLASTYKGKFSLPGADLRSKGLNRIGNLIVPNDNYIKFEDWIIPIFDQMLIEQKTQNVLWTPSRMIARLGKEINNETSYLYWAYKNNIPVFCPSITDGSIGDMLYFHSVSNPGPGLVVDIVQDVIAMDNEAVHASPQKTGIIILGGGLPKHHICNANMMRNGADFAVFINTAQEYDGSDSGARPDEAVSWGKISSTGKAVKVHCDATIAFPLLVAETFAVKKEKASKVNGF.

The protein belongs to the deoxyhypusine synthase family. In terms of assembly, homotetramer. NAD(+) serves as cofactor. Post-translationally, the N-terminus is blocked. In terms of tissue distribution, expressed in roots.

The enzyme catalyses putrescine + spermidine = sym-homospermidine + propane-1,3-diamine. It functions in the pathway alkaloid biosynthesis; pyrrolizidine alkaloid biosynthesis. Its function is as follows. Catalyzes the transfer of an aminobutyl unit from spermidine onto putrescine. The resulting polyamine homospermidine is a precursor in the biosynthesis of pyrrolizidine alkaloids. This Senecio vernalis (Spring groundsel) protein is Homospermidine synthase 1 (HSS1).